Here is a 1605-residue protein sequence, read N- to C-terminus: Ribosome-binding protein 1 (1605 aa).

Residues 1 to 7 (MDIYDTQ) lie on the Lumenal side of the membrane. The helical transmembrane segment at 8–28 (TLGVVVFGGFMVVSAIGIFLV) threads the bilayer. Residues 29–1605 (STFSMKETSY…GSSSKEGTSV (1577 aa)) lie on the Cytoplasmic side of the membrane. A disordered region spans residues 44 to 88 (NQRKEMAKTHHQKGEKKKKEKTVEKKGKTKKKEEKPNGKIPEHDL). Basic residues predominate over residues 52–63 (THHQKGEKKKKE). Basic and acidic residues predominate over residues 64-88 (KTVEKKGKTKKKEEKPNGKIPEHDL). Position 111 is a phosphoserine (Ser111). The tract at residues 114–150 (SSVGHTPIATVPAMPQEKLASSPKDRKKKEKKVAKVE) is disordered. Lys148 participates in a covalent cross-link: Glycyl lysine isopeptide (Lys-Gly) (interchain with G-Cter in SUMO2). Phosphoserine is present on residues Ser159 and Ser165. A disordered region spans residues 172–849 (ATPKEVPMVA…PGPPDCDGPL (678 aa)). 61 tandem repeats follow at residues 196 to 205 (SQGKKGQGAQ), 206 to 215 (NQAKKGEGAQ), 216 to 225 (NQGKKGEGAQ), 226 to 235 (NQAKKGEGAQ), 236 to 245 (NQAKKGEGAQ), 246 to 255 (NQGKKGEGAQ), 256 to 265 (NQAKKGEGGQ), 266 to 275 (NQAKKGEGAQ), 276 to 285 (NQGKKGEGAQ), 286 to 295 (NQGKKGEGAQ), 296 to 305 (NQAKKGEGAQ), 306 to 315 (NQAKKGEGAQ), 316 to 325 (NQGKKGEGAQ), 326 to 335 (NQSKKGEGAQ), 336 to 345 (NQAKKGEGGQ), 346 to 355 (NQAKKGEGAQ), 356 to 365 (NQAKKGEGAQ), 366 to 375 (NQAKKGEGVQ), 376 to 385 (NQAKKGVEGA), 386 to 395 (QNQGKKGEAN), 396 to 405 (QNQAKKGEGG), 406 to 415 (QNQTKKGEGP), 416 to 425 (QNQGKKGEAA), 426 to 435 (QKQDKKIEGA), 436 to 445 (QNQGKKPEGT), 446 to 455 (SNQGKKGEGA), 456 to 465 (QNQGKKGEGA), 466 to 475 (QNQSKKGEGA), 476 to 485 (QNQAKKGEGG), 486 to 495 (QNQAKKGEGA), 496 to 505 (QNQAKKGEGA), 506 to 515 (QNQAKKGEGV), 516 to 525 (QNQAKKGVEG), 527 to 536 (QNQGKKGEAN), 537 to 546 (QNQAKKGEGG), 547 to 556 (QNQTKKGEGP), 557 to 566 (QNQGKKGEAA), 567 to 576 (QKQDKKIEGA), 577 to 586 (QNQGKKPEGT), 587 to 596 (SNQGKKGEGA), 597 to 606 (QNQGKKGEGA), 607 to 616 (QNQGKKGEGA), 617 to 626 (QNQGKKGEGA), 628 to 637 (NQGKKGEGAQ), 638 to 647 (NQGKKGEGAQ), 648 to 657 (NQGKKGEGAQ), 658 to 667 (NQGKKGEGPQ), 668 to 677 (NQAKKGEGAQ), 678 to 687 (NQGKKGEGAQ), 688 to 697 (NQGKKGEGAQ), 698 to 707 (NQGKKAEGVQ), 708 to 717 (SQSKKGEGTQ), 718 to 727 (NQGKKGDGNP), 729 to 738 (QGKKGEGASN), 739 to 748 (QNRKTDTVAN), 749 to 758 (QGTKQEGVSN), 759 to 768 (QVKKSEGSPN), 769 to 778 (QGKKAEGAPN), 779 to 788 (QGKKKDGSPS), 789 to 798 (QAKKVDAAAN), and 799 to 808 (QGKKSEMAPA). The interval 196–808 (SQGKKGQGAQ…QGKKSEMAPA (613 aa)) is 61 X 10 AA tandem repeats of [NSQ]-[NKQVGA]-[GSAQKRT]-[ASGDTK]-[KGTQSAV]-[KGAED]-[EQVGIPTDMA]-[EGVAS]-[AGVPETNS]-[AQNGPTVS]. Low complexity predominate over residues 197-208 (QGKKGQGAQNQA). Composition is skewed to polar residues over residues 224–258 (AQNQAKKGEGAQNQAKKGEGAQNQGKKGEGAQNQA), 274–338 (AQNQ…QNQA), 354–378 (AQNQAKKGEGAQNQAKKGEGVQNQA), and 385–399 (AQNQGKKGEANQNQA). Over residues 420-433 (KKGEAAQKQDKKIE) the composition is skewed to basic and acidic residues. Composition is skewed to polar residues over residues 435-479 (AQNQ…QNQA), 495-519 (AQNQAKKGEGAQNQAKKGEGVQNQA), and 526-540 (AQNQGKKGEANQNQA). The segment covering 561–574 (KKGEAAQKQDKKIE) has biased composition (basic and acidic residues). Composition is skewed to polar residues over residues 576-720 (AQNQ…QNQG) and 736-769 (ASNQNRKTDTVANQGTKQEGVSNQVKKSEGSPNQ). Residue Ser786 is modified to Phosphoserine. The span at 811–821 (QKASMVQSQEA) shows a compositional bias: polar residues. Phosphoserine is present on Ser818. Residue Lys823 forms a Glycyl lysine isopeptide (Lys-Gly) (interchain with G-Cter in SUMO1) linkage. The residue at position 1135 (Lys1135) is an N6-acetyllysine. Phosphoserine is present on residues Ser1162 and Ser1178. Disordered regions lie at residues 1460–1481 (MRSHVEDGDVAGSPAVPPAEQD) and 1571–1605 (TTQEQLTKEKDTVKKLQEQLGKAEDGSSSKEGTSV). The span at 1576–1598 (LTKEKDTVKKLQEQLGKAEDGSS) shows a compositional bias: basic and acidic residues.

As to expression, widely expressed.

The protein localises to the endoplasmic reticulum membrane. Acts as a ribosome receptor and mediates interaction between the ribosome and the endoplasmic reticulum membrane. This Mus musculus (Mouse) protein is Ribosome-binding protein 1 (Rrbp1).